The following is a 686-amino-acid chain: MYLKSLKIYNFRKFGTNNNKIEFVDAKSFQEQRNKKEVNIAPTTTLIVGKNNCGKTTIIKSLDNLINNNKDAFKANDFNFLYLKKLIEYYEQAIPKLDDELKEKIKTPYLQFNICIGIENNSNDLVTNIVRFMKLDDINNSELKIVIKVELENEEVFIRDVKKLLEKNDNSSLRFNSFLELINDSDFKINYYNTDNDKIDNFNIKNLIELRPIKANNIESEKCLSKAFSKIIEYRYKTLFEEESDNLNSTIININRTLTKLISEKHTVSINKSLEEIESNEKLQVLLRADLTFQNVMNNLIKYEYVERNMNIPENQFGLGYTNLMMIIADLIDYMEKYPENSFNSKVNLISIEEPETFMHPQMQELFIKNINEAIASLLKSKNKNVNSQLIITTHSSHILNSKIHSGNTFNNINYVTTKNNYTHVVNLHDDIIIPKSEKKAHKREQDLKFLKKHIKYKVSELFFSDAIIFVEGVTEETLLKYYIDDNNKLNKYYISVFNIDGAHGMVYHNLIEILQVPALIITDLDIERDDDEKKNFKQISDLTGKFTTNKTIKKYNDDSNSLEELQHEQLKINNMYIAYQGKIEEYYATSFEEAFILTNYKNELLNSVLKKMKPQIYENIMGEGDDFTKIKENSYKLQKKLSNDKSDFANELLYKFITEDITIPSLPKYIKSGLSWLAKKLEGEE.

Residues 1–423 form an ATPase domain region; it reads MYLKSLKIYN…NYVTTKNNYT (423 aa). An ATP-binding site is contributed by 52–56; sequence NCGKT. The toprim domain stretch occupies residues 463–599; that stretch reads FFSDAIIFVE…TSFEEAFILT (137 aa). A divalent metal cation is bound by residues E472, E476, D559, and E604.

In terms of assembly, homotetramer. Forms the core of the anti-phage defense complex. Interacts with GajB; 2 GajB dimers dock at opposite sides of the GajA complex to form a 4:4 GajA-GajB assembly (GajAB). GajAB interacts with Bacillus phage Phi3T Gad1 protein; this interaction forms a 4:4:8 GajAB-Gad1 complex and leads to GajAB inhibition. The cofactor is Mg(2+).

Component of antiviral defense system Gabija type II, composed of GajA and GajB. Probably a nicking endonuclease that is strongly inhibited by physiological levels of nucleotides (NTP and dNTP). Expression of Gabija type II in B.subtilis (strain BEST7003) confers resistance to phages phi105, and SpBeta. During viral replication, when nucleotides are rapidly consumed, it is de-suppressed and degrades target DNA. This Bacillus cereus (strain HuB5-5) protein is Endonuclease GajA.